We begin with the raw amino-acid sequence, 402 residues long: Calcium-responsive transactivator (402 aa).

Residues 1–148 form an N-terminal auto-inhibitory domain; necessary for interaction with SMARCA4/BRG1 region; the sequence is MSVAFASARP…TLPTTSMSLS (148 aa). An SH2-binding motif is present at residues 50–53; it reads YQQI. Disordered stretches follow at residues 72–171 and 221–402; these read QSLL…VPMQ and AMMG…NYQQ. The span at 85–106 shows a compositional bias: low complexity; it reads LGPGALSQSGSSQGLHPQGSLS. Composition is skewed to polar residues over residues 128-149 and 161-171; these read NHVS…SLSG and SGPTSQSVPMQ. A methionine-rich intra-molecular domain region spans residues 149 to 238; it reads GSGHGTGPGY…GGSMMGQRPM (90 aa). Residues 233–251 show a composition bias toward low complexity; sequence MGQRPMAPYRPSQQGSSQQ. Positions 252 to 323 are MFD domain; sequence YLGQEEYYSE…SQYSQQQAGY (72 aa). Over residues 261–277 the composition is skewed to polar residues; sequence EQYSHSQGSAEPMSQQY. The span at 296 to 305 shows a compositional bias: basic and acidic residues; that stretch reads SYDRSFEDPT. Low complexity predominate over residues 311 to 375; it reads GGNSQYSQQQ…QGQGQQYGSY (65 aa). Residues 340 to 402 are necessary for nuclear localization; the sequence is NQQSYPGQQQ…EQGQYGNYQQ (63 aa). The short motif at 359-362 is the SH2-binding element; the sequence is SQYS. Residues 376–388 are compositionally biased toward polar residues; that stretch reads RTSQTGPSAQQQR. Positions 377–385 match the SH3-binding motif; it reads TSQTGPSAQ. The segment covering 390–402 has biased composition (low complexity); it reads YGYEQGQYGNYQQ. A necessary for interaction with CREBBP and for the recruitment of CREBBP to the nuclear bodies region spans residues 393-402; it reads EQGQYGNYQQ. The SH2-binding signature appears at 397–400; that stretch reads YGNY.

It belongs to the SS18 family. As to quaternary structure, homodimer. Dimerization may be necessary for its function in neuronal dendritic development. Interacts (via C-terminus) with CREBBP (via N-terminus), EP300 and SMARCA4/BRG1. Interacts with the nBAF complex. Association with CREBBP facilitates transcription while the association with SMARCA4/BRG1 suppresses CREST-mediated transcription in resting neurons.

Its subcellular location is the nucleus. It is found in the chromosome. The protein localises to the centromere. It localises to the kinetochore. Functionally, transcriptional activator which is required for calcium-dependent dendritic growth and branching in cortical neurons. Recruits CREB-binding protein (CREBBP) to nuclear bodies. Component of the CREST-BRG1 complex, a multiprotein complex that regulates promoter activation by orchestrating a calcium-dependent release of a repressor complex and a recruitment of an activator complex. In resting neurons, transcription of the c-FOS promoter is inhibited by BRG1-dependent recruitment of a phospho-RB1-HDAC1 repressor complex. Upon calcium influx, RB1 is dephosphorylated by calcineurin, which leads to release of the repressor complex. At the same time, there is increased recruitment of CREBBP to the promoter by a CREST-dependent mechanism, which leads to transcriptional activation. The CREST-BRG1 complex also binds to the NR2B promoter, and activity-dependent induction of NR2B expression involves a release of HDAC1 and recruitment of CREBBP. The chain is Calcium-responsive transactivator (Ss18l1) from Mus musculus (Mouse).